We begin with the raw amino-acid sequence, 295 residues long: Hepatic leukemia factor (295 aa).

Over residues 34-52 the composition is skewed to basic and acidic residues; sequence LHPEDAFSKDRDKGKKLDD. Disordered stretches follow at residues 34-69 and 93-160; these read LHPEDAFSKDRDKGKKLDDGSNSPTVPQSAFLGPTL and SENG…NRNT. Residues 225–288 form the bZIP domain; that stretch reads DDKYWARRRK…GKCKNILAKY (64 aa). A basic motif region spans residues 227-247; it reads KYWARRRKNNMAAKRSRDARR. Positions 248–255 are leucine-zipper; that stretch reads LKENQIAI.

This sequence belongs to the bZIP family. PAR subfamily. As to quaternary structure, binds DNA specifically as homodimer or heterodimer with other PAR factors. Isoform HLF43 is abundant in brain, liver and kidney. Isoform HLF36 is expressed only in the liver. Both isoforms accumulate in the liver with different circadian amplitudes. Isoform HLF36 reaches peak expression levels between 8 and 12 p.m. Isoform HLF43 displays a more pronounced fluctuation through the day.

Its subcellular location is the nucleus. This Rattus norvegicus (Rat) protein is Hepatic leukemia factor (Hlf).